The chain runs to 279 residues: S-methyl-5'-thioadenosine phosphorylase (279 aa).

Phosphate-binding positions include S28, 70 to 71, and 103 to 104; these read RH and SA. Position 202 (M202) interacts with substrate. Residue T203 coordinates phosphate. 226-228 is a substrate binding site; the sequence is DYD.

It belongs to the PNP/MTAP phosphorylase family. MTAP subfamily. Homohexamer. Dimer of a homotrimer.

The catalysed reaction is S-methyl-5'-thioadenosine + phosphate = 5-(methylsulfanyl)-alpha-D-ribose 1-phosphate + adenine. The protein operates within amino-acid biosynthesis; L-methionine biosynthesis via salvage pathway; S-methyl-5-thio-alpha-D-ribose 1-phosphate from S-methyl-5'-thioadenosine (phosphorylase route): step 1/1. Catalyzes the reversible phosphorylation of S-methyl-5'-thioadenosine (MTA) to adenine and 5-methylthioribose-1-phosphate. Involved in the breakdown of MTA, a major by-product of polyamine biosynthesis. Responsible for the first step in the methionine salvage pathway after MTA has been generated from S-adenosylmethionine. Has broad substrate specificity with 6-aminopurine nucleosides as preferred substrates. This chain is S-methyl-5'-thioadenosine phosphorylase, found in Pyrobaculum aerophilum (strain ATCC 51768 / DSM 7523 / JCM 9630 / CIP 104966 / NBRC 100827 / IM2).